Reading from the N-terminus, the 472-residue chain is Tubulin gamma chain (472 aa).

142–148 (AGGTGSG) provides a ligand contact to GTP.

This sequence belongs to the tubulin family. In terms of assembly, component of the gamma-tubulin small complex (gamma-TuSC) composed of tubulin gamma chain, gamma-tubulin complex protein 2 (GCP2) and gamma-tubulin complex protein 3 (GCP3). Interacts with GCP2 and GCP3. Interacts with EB1.

Its subcellular location is the cytoplasm. The protein resides in the cytoskeleton. It localises to the flagellum axoneme. The protein localises to the flagellum basal body. It is found in the spindle. Its subcellular location is the microtubule organizing center. Its function is as follows. Tubulin is the major constituent of microtubules (Potential). The gamma chain is found at microtubule organizing centers (MTOC) such as the centrosome. Component of the gamma-tubulin small complex (gamma-TuSC) involved in microtubule nucleation for the formation of median bodies and in the biogenesis of flagella. Gamma-TuSC may be required for the correct positioning of EB1 within the trophozoites. The protein is Tubulin gamma chain of Giardia intestinalis (strain ATCC 50803 / WB clone C6) (Giardia lamblia).